A 771-amino-acid polypeptide reads, in one-letter code: Nitrogen regulation protein NtrY (771 aa).

4 helical membrane passes run 22–46 (FGLF…ILMG), 56–76 (VVIS…AMVG), 99–122 (IVGL…SLTL), and 295–319 (VAFA…GLNF). Residues 321 to 374 (KWLVAPIRRLMSAADHVAEGNLDVRVPIYRAEGDLASLAETFNKMTHELRSQRE) form the HAMP domain. The PAS domain maps to 386 to 458 (RRRFTEAVLS…HARQRSVQGN (73 aa)). Residues 511–728 (RIAHEIKNPL…WIRLTLKAEG (218 aa)) enclose the Histidine kinase domain. Histidine 514 bears the Phosphohistidine; by autocatalysis mark. The segment at 727–771 (EGPKAEPTDASTKATGAATPAAPAASAMARDAAADSAARGKNERT) is disordered. A compositionally biased stretch (low complexity) spans 740–763 (ATGAATPAAPAASAMARDAAADSA).

It is found in the cell membrane. The catalysed reaction is ATP + protein L-histidine = ADP + protein N-phospho-L-histidine.. Functionally, member of the two-component regulatory system NtrY/NtrX involved in nitrogen level control. Probably activates NtrX by phosphorylation. This Azorhizobium caulinodans (strain ATCC 43989 / DSM 5975 / JCM 20966 / LMG 6465 / NBRC 14845 / NCIMB 13405 / ORS 571) protein is Nitrogen regulation protein NtrY (ntrY).